The primary structure comprises 449 residues: 3-phosphoshikimate 1-carboxyvinyltransferase (449 aa).

Residues 1 to 29 (MSHDSVPSPITARAGTPLRGRLRPPGDKS) are disordered. The 3-phosphoshikimate site is built by K28, S29, and R33. K28 is a phosphoenolpyruvate binding site. Positions 101 and 129 each coordinate phosphoenolpyruvate. 3-phosphoshikimate contacts are provided by S175, Q177, D330, and K357. Residue Q177 coordinates phosphoenolpyruvate. Residue D330 is the Proton acceptor of the active site. R361 and R405 together coordinate phosphoenolpyruvate.

This sequence belongs to the EPSP synthase family. In terms of assembly, monomer.

It localises to the cytoplasm. The catalysed reaction is 3-phosphoshikimate + phosphoenolpyruvate = 5-O-(1-carboxyvinyl)-3-phosphoshikimate + phosphate. The protein operates within metabolic intermediate biosynthesis; chorismate biosynthesis; chorismate from D-erythrose 4-phosphate and phosphoenolpyruvate: step 6/7. Functionally, catalyzes the transfer of the enolpyruvyl moiety of phosphoenolpyruvate (PEP) to the 5-hydroxyl of shikimate-3-phosphate (S3P) to produce enolpyruvyl shikimate-3-phosphate and inorganic phosphate. The protein is 3-phosphoshikimate 1-carboxyvinyltransferase of Methylobacterium sp. (strain 4-46).